The sequence spans 430 residues: MTTLTLNTSLLSSRRILAAFSGGLDSTVLLHQLVLWRERHPDVTLRAIHIHHGLSPHAESWVRHCETVCARWQVPLVVERVTLADNGLGIEAHAREARYRAFAQTLLPGEVLATAQHLDDQCETFLLALKRGSGPAGLSAMGERSPFAGTLLLRPLLRETRKTLEQWAVRHGLCWIEDESNQDDAYDRNFLRLRALPLLQQRWPHFPAAVARSATLCAEQERLLDELLASDLTDCITTEGTLRLSPLMSMSDVRRAAILRRWLAMRNAPMPSRDALERIWQEVALARDDASPCLRFGDHEIRRYQSQLWWIKSVAGQHETTVAWPVWQTPLALPAGLGTVQLVPGGELRRPREEESVSIRFKAPGLLHIVGRHGGRKLKKIWQEQGIPPWRRDTTPLLFYGETLIAAAGVFVTREGAAEDKEGVSLVWHA.

Residue 21 to 26 (SGGLDS) participates in ATP binding.

The protein belongs to the tRNA(Ile)-lysidine synthase family.

The protein localises to the cytoplasm. It carries out the reaction cytidine(34) in tRNA(Ile2) + L-lysine + ATP = lysidine(34) in tRNA(Ile2) + AMP + diphosphate + H(+). Its function is as follows. Ligates lysine onto the cytidine present at position 34 of the AUA codon-specific tRNA(Ile) that contains the anticodon CAU, in an ATP-dependent manner. Cytidine is converted to lysidine, thus changing the amino acid specificity of the tRNA from methionine to isoleucine. The polypeptide is tRNA(Ile)-lysidine synthase (Salmonella dublin (strain CT_02021853)).